The chain runs to 200 residues: Large ribosomal subunit protein uL4 (200 aa).

The segment at 42-65 (TRAQKTRSEVSGGGAKPWRQKGTG) is disordered.

It belongs to the universal ribosomal protein uL4 family. As to quaternary structure, part of the 50S ribosomal subunit.

In terms of biological role, one of the primary rRNA binding proteins, this protein initially binds near the 5'-end of the 23S rRNA. It is important during the early stages of 50S assembly. It makes multiple contacts with different domains of the 23S rRNA in the assembled 50S subunit and ribosome. Its function is as follows. Forms part of the polypeptide exit tunnel. This chain is Large ribosomal subunit protein uL4, found in Vibrio atlanticus (strain LGP32) (Vibrio splendidus (strain Mel32)).